Consider the following 395-residue polypeptide: General transcription factor IIH subunit 2 (395 aa).

One can recognise a VWFA domain in the interval 60 to 236; sequence HLYVVVDGSR…HYKELLTHHV (177 aa). Tyr95 carries the post-translational modification Phosphotyrosine. The C4-type zinc-finger motif lies at 291-308; it reads CPQCRAKYCELPVECKIC.

Belongs to the GTF2H2 family. In terms of assembly, component of the TFIID-containing RNA polymerase II pre-initiation complex that is composed of TBP and at least GTF2A1, GTF2A2, GTF2E1, GTF2E2, GTF2F1, GTF2H2, GTF2H3, GTF2H4, GTF2H5, GTF2B, TCEA1, ERCC2 and ERCC3. Component of the 7-subunit TFIIH core complex composed of XPB/ERCC3, XPD/ERCC2, GTF2H1, GTF2H2, GTF2H3, GTF2H4 and GTF2H5, which is active in NER. The core complex associates with the 3-subunit CDK-activating kinase (CAK) module composed of CCNH/cyclin H, CDK7 and MNAT1 to form the 10-subunit holoenzyme (holo-TFIIH) active in transcription. Interacts with XPB, XPD, GTF2H1 and GTF2H3.

It is found in the nucleus. Component of the general transcription and DNA repair factor IIH (TFIIH) core complex, which is involved in general and transcription-coupled nucleotide excision repair (NER) of damaged DNA and, when complexed to CAK, in RNA transcription by RNA polymerase II. In NER, TFIIH acts by opening DNA around the lesion to allow the excision of the damaged oligonucleotide and its replacement by a new DNA fragment. In transcription, TFIIH has an essential role in transcription initiation. When the pre-initiation complex (PIC) has been established, TFIIH is required for promoter opening and promoter escape. Phosphorylation of the C-terminal tail (CTD) of the largest subunit of RNA polymerase II by the kinase module CAK controls the initiation of transcription. The N-terminus of GTF2H2 interacts with and regulates XPD whereas an intact C-terminus is required for a successful escape of RNAP II form the promoter. The polypeptide is General transcription factor IIH subunit 2 (GTF2H2) (Bos taurus (Bovine)).